We begin with the raw amino-acid sequence, 186 residues long: dCTP deaminase (186 aa).

107 to 112 serves as a coordination point for dCTP; sequence KSTYAR. Glu133 serves as the catalytic Proton donor/acceptor. The dCTP site is built by Gln152, Tyr166, and Gln176.

Belongs to the dCTP deaminase family. Homotrimer.

It carries out the reaction dCTP + H2O + H(+) = dUTP + NH4(+). It functions in the pathway pyrimidine metabolism; dUMP biosynthesis; dUMP from dCTP (dUTP route): step 1/2. Catalyzes the deamination of dCTP to dUTP. In Campylobacter fetus subsp. fetus (strain 82-40), this protein is dCTP deaminase.